Consider the following 318-residue polypeptide: MHVLFIIDPLPLLKAYKDSSVAMMQALQARGHTLSVALQGDLYIDAGEVRTRFAPIALRDGADLHGHDWWRETGAADEAPLARFDAVVMRKDPPFDMEYVYSTHLLEYAQQQGARVFNSGAAIRNHPEKLAITEFPDLTTPTLVTRDMARIRAFHAAQGDVIVKPLDDMGGTGIFRLQRSEPNLNAILETLTDNGTRTIMAQRYIPEIVKGDKRILLIGGEPMPYSLARIPLAGETRGNLAAGGRGVAQPLSERDLHLARTVADRLAGRGLLLVGLDVIGDYITEVNVTSPTCFVEITEQTGFNVPEMFAVALESAAG.

The region spanning 129–314 is the ATP-grasp domain; that stretch reads KLAITEFPDL…VPEMFAVALE (186 aa). 155-211 contributes to the ATP binding site; the sequence is HAAQGDVIVKPLDDMGGTGIFRLQRSEPNLNAILETLTDNGTRTIMAQRYIPEIVKG. 2 residues coordinate Mg(2+): E285 and N287.

It belongs to the prokaryotic GSH synthase family. Requires Mg(2+) as cofactor. Mn(2+) serves as cofactor.

The enzyme catalyses gamma-L-glutamyl-L-cysteine + glycine + ATP = glutathione + ADP + phosphate + H(+). It functions in the pathway sulfur metabolism; glutathione biosynthesis; glutathione from L-cysteine and L-glutamate: step 2/2. This Bordetella pertussis (strain Tohama I / ATCC BAA-589 / NCTC 13251) protein is Glutathione synthetase.